We begin with the raw amino-acid sequence, 310 residues long: D-alanyl-D-alanine endopeptidase (310 aa).

Positions 1–25 (MPKFRVSLFSLALMLAVPFAPQAVA) are cleaved as a signal peptide. Catalysis depends on Ser-67, which acts as the Acyl-ester intermediate. The active-site Proton acceptor is Lys-70. Residue Ser-124 is part of the active site. Lys-231 is a substrate binding site.

This sequence belongs to the peptidase S11 family. Pbp8 is a proteolytic product of Pbp7.

Its subcellular location is the periplasm. In terms of biological role, cell wall formation. May play a specialized role in remodeling the cell wall. Specifically hydrolyzes the DD-diaminopimelate-alanine bonds in high-molecular-mass murein sacculi. The protein is D-alanyl-D-alanine endopeptidase (pbpG) of Escherichia coli (strain K12).